Here is a 213-residue protein sequence, read N- to C-terminus: Holliday junction resolvase RecU (213 aa).

Residues Thr99, Asp101, Glu114, and Gln133 each contribute to the Mg(2+) site.

This sequence belongs to the RecU family. Requires Mg(2+) as cofactor.

The protein localises to the cytoplasm. The enzyme catalyses Endonucleolytic cleavage at a junction such as a reciprocal single-stranded crossover between two homologous DNA duplexes (Holliday junction).. In terms of biological role, endonuclease that resolves Holliday junction intermediates in genetic recombination. Cleaves mobile four-strand junctions by introducing symmetrical nicks in paired strands. Promotes annealing of linear ssDNA with homologous dsDNA. Required for DNA repair, homologous recombination and chromosome segregation. The polypeptide is Holliday junction resolvase RecU (Lactococcus lactis subsp. cremoris (strain SK11)).